Here is a 275-residue protein sequence, read N- to C-terminus: WIMGHMVNAIEQVDEFLDLGANAIEFDVDFDDDGVAKYTHHGIPCDCGRLCTKYAVFTEYLDYVRQVTTPGDPKFRKELVLLALDLKLQRISSEKAYAAGVDVATKLLDHYWMRGWNGGRAYILLNIPLVEDYEFIRAFKDTLRKEGHEQYNAKVGINFTGNEDLDEIREVLEKLGEDEHIWQADGITSCFPRGTERLKKALEKRDTPGYKYIPKVYAWTLVRSSIMRRSLRLGVDGVMSNYPDSVVKVLKEKEFSDKFRLATYADNPWEKFTPI.

The active site involves histidine 5. Mg(2+) is bound by residues glutamate 25 and aspartate 27. Histidine 41 functions as the Nucleophile in the catalytic mechanism. 2 disulfides stabilise this stretch: cysteine 45-cysteine 51 and cysteine 47-cysteine 190. Aspartate 85 serves as a coordination point for Mg(2+).

It belongs to the arthropod phospholipase D family. Class II subfamily. Mg(2+) serves as cofactor. As to expression, expressed by the venom gland.

Its subcellular location is the secreted. The catalysed reaction is an N-(acyl)-sphingosylphosphocholine = an N-(acyl)-sphingosyl-1,3-cyclic phosphate + choline. It carries out the reaction an N-(acyl)-sphingosylphosphoethanolamine = an N-(acyl)-sphingosyl-1,3-cyclic phosphate + ethanolamine. It catalyses the reaction a 1-acyl-sn-glycero-3-phosphocholine = a 1-acyl-sn-glycero-2,3-cyclic phosphate + choline. The enzyme catalyses a 1-acyl-sn-glycero-3-phosphoethanolamine = a 1-acyl-sn-glycero-2,3-cyclic phosphate + ethanolamine. In terms of biological role, dermonecrotic toxins cleave the phosphodiester linkage between the phosphate and headgroup of certain phospholipids (sphingolipid and lysolipid substrates), forming an alcohol (often choline) and a cyclic phosphate. This toxin acts on sphingomyelin (SM). It may also act on ceramide phosphoethanolamine (CPE), lysophosphatidylcholine (LPC) and lysophosphatidylethanolamine (LPE), but not on lysophosphatidylserine (LPS), and lysophosphatidylglycerol (LPG). It acts by transphosphatidylation, releasing exclusively cyclic phosphate products as second products. Induces dermonecrosis, hemolysis, increased vascular permeability, edema, inflammatory response, and platelet aggregation. In Sicarius peruensis (Six-eyed sand spider), this protein is Dermonecrotic toxin SpeSicTox-betaIIA3i.